The sequence spans 127 residues: Translation initiation factor 5A (127 aa).

Lys-35 bears the Hypusine mark.

Belongs to the eIF-5A family.

The protein resides in the cytoplasm. In terms of biological role, functions by promoting the formation of the first peptide bond. This is Translation initiation factor 5A from Methanospirillum hungatei JF-1 (strain ATCC 27890 / DSM 864 / NBRC 100397 / JF-1).